A 303-amino-acid chain; its full sequence is MAAVAKPVQAWADDDDIDDGTTERLPDPQTIVNKDGTKTIISWRFNDQGQKVKTTRRVRLTTHREVVNPRVAERKKWEKFGLSAKDGPGPASDTTSVGENIIFRPSANWRKDQKDESKDANANAMKDKLKDKKVKCRICNGEHFTARCPYKDTMAPIGEAAPAGGVGGGGDDEGGILSAPGAAGGAGAKKGSYVPPALRGDRKEGEKMGGGAGGKYGERDDLATLRVTNVSEMAEEQELRDMFERFGRVTRVFLAKDRDTGLAKGFAFISFADREDAVKACNKMDGWGFKHLILRVEFAKKAT.

4 disordered regions span residues 1 to 32 (MAAVAKPVQAWADDDDIDDGTTERLPDPQTIV), 81 to 100 (GLSAKDGPGPASDTTSVGEN), 105 to 126 (PSANWRKDQKDESKDANANAMK), and 181 to 215 (GAAGGAGAKKGSYVPPALRGDRKEGEKMGGGAGGK). A compositionally biased stretch (basic and acidic residues) spans 109–126 (WRKDQKDESKDANANAMK). The RRM domain occupies 223 to 301 (ATLRVTNVSE…LILRVEFAKK (79 aa)).

This sequence belongs to the eIF-3 subunit G family. As to quaternary structure, component of the eukaryotic translation initiation factor 3 (eIF-3) complex.

It localises to the cytoplasm. Functionally, RNA-binding component of the eukaryotic translation initiation factor 3 (eIF-3) complex, which is involved in protein synthesis of a specialized repertoire of mRNAs and, together with other initiation factors, stimulates binding of mRNA and methionyl-tRNAi to the 40S ribosome. The eIF-3 complex specifically targets and initiates translation of a subset of mRNAs involved in cell proliferation. This subunit can bind 18S rRNA. The polypeptide is Eukaryotic translation initiation factor 3 subunit G (Pyricularia oryzae (strain 70-15 / ATCC MYA-4617 / FGSC 8958) (Rice blast fungus)).